Here is a 469-residue protein sequence, read N- to C-terminus: Glutamate--tRNA ligase 1 (469 aa).

The 'HIGH' region motif lies at 10–20 (PSPTGYLHIGG). Positions 99, 101, 126, and 128 each coordinate Zn(2+). A 'KMSKS' region motif is present at residues 237–241 (RLSKR). K240 is a binding site for ATP.

It belongs to the class-I aminoacyl-tRNA synthetase family. Glutamate--tRNA ligase type 1 subfamily. In terms of assembly, monomer. Zn(2+) serves as cofactor.

It is found in the cytoplasm. It carries out the reaction tRNA(Glu) + L-glutamate + ATP = L-glutamyl-tRNA(Glu) + AMP + diphosphate. Catalyzes the attachment of glutamate to tRNA(Glu) in a two-step reaction: glutamate is first activated by ATP to form Glu-AMP and then transferred to the acceptor end of tRNA(Glu). The chain is Glutamate--tRNA ligase 1 from Coxiella burnetii (strain CbuK_Q154) (Coxiella burnetii (strain Q154)).